Reading from the N-terminus, the 357-residue chain is Protein BIG GRAIN 1-like A (357 aa).

Disordered stretches follow at residues 1-146 (MEIT…KELG) and 208-233 (SSTC…GKSK). The segment covering 75–87 (DFERSRRKTDFLR) has biased composition (basic and acidic residues). Low complexity-rich tracts occupy residues 88–104 (HSNS…SSES) and 112–127 (KSSA…QPKP). Polar residues predominate over residues 129–139 (RTSSVDHSSAV). A compositionally biased stretch (low complexity) spans 208 to 223 (SSTCSSASSFSRSCLS).

It belongs to the BIG GRAIN 1 (BG1) plant protein family.

It localises to the cell membrane. Its function is as follows. Involved in auxin transport. Regulator of the auxin signaling pathway. This chain is Protein BIG GRAIN 1-like A, found in Arabidopsis thaliana (Mouse-ear cress).